The following is a 510-amino-acid chain: D-alanine--D-alanyl carrier protein ligase (510 aa).

ATP is bound at residue Thr157–Ser158. D-alanine is bound at residue Asp202. Asn297–Thr302 provides a ligand contact to ATP. Residue Val306 participates in D-alanine binding. ATP contacts are provided by Asp389 and Lys498. A D-alanine-binding site is contributed by Lys498.

It belongs to the ATP-dependent AMP-binding enzyme family. DltA subfamily.

It is found in the cytoplasm. It carries out the reaction holo-[D-alanyl-carrier protein] + D-alanine + ATP = D-alanyl-[D-alanyl-carrier protein] + AMP + diphosphate. Its pathway is cell wall biogenesis; lipoteichoic acid biosynthesis. Its function is as follows. Catalyzes the first step in the D-alanylation of lipoteichoic acid (LTA), the activation of D-alanine and its transfer onto the D-alanyl carrier protein (Dcp) DltC. In an ATP-dependent two-step reaction, forms a high energy D-alanyl-AMP intermediate, followed by transfer of the D-alanyl residue as a thiol ester to the phosphopantheinyl prosthetic group of the Dcp. D-alanylation of LTA plays an important role in modulating the properties of the cell wall in Gram-positive bacteria, influencing the net charge of the cell wall. The protein is D-alanine--D-alanyl carrier protein ligase of Listeria monocytogenes serotype 4a (strain HCC23).